The chain runs to 220 residues: MRIERVNESTLKFYLTYTDIEARGFKRDDLWTSRKKGEEFFWSVMEEVNQEEDFFFDGPLWIQVHAFDKGIEVVVTKSKNDDLQLPEDDSDLNIDEKVNDFINNSMHSDSELRDLLMRASEESTEQFFIVHFDDLEDVIQFSYHNYEDVDIEDLLYMYEGKYYYYVEFDDHMSEDAIHSYIAHLLEYANETQISHEQLDEYGKIVMSHNVKRQVKQYFKQ.

This sequence belongs to the MecA family. In terms of assembly, homodimer.

Enables the recognition and targeting of unfolded and aggregated proteins to the ClpC protease or to other proteins involved in proteolysis. In Macrococcus caseolyticus (strain JCSC5402) (Macrococcoides caseolyticum), this protein is Adapter protein MecA.